We begin with the raw amino-acid sequence, 304 residues long: Aspartate carbamoyltransferase catalytic subunit (304 aa).

Carbamoyl phosphate-binding residues include Arg49 and Thr50. Lys77 contributes to the L-aspartate binding site. Positions 99, 127, and 130 each coordinate carbamoyl phosphate. L-aspartate is bound by residues Arg160 and Arg211. Ala252 and Pro253 together coordinate carbamoyl phosphate.

Belongs to the aspartate/ornithine carbamoyltransferase superfamily. ATCase family. Heterododecamer (2C3:3R2) of six catalytic PyrB chains organized as two trimers (C3), and six regulatory PyrI chains organized as three dimers (R2).

The catalysed reaction is carbamoyl phosphate + L-aspartate = N-carbamoyl-L-aspartate + phosphate + H(+). Its pathway is pyrimidine metabolism; UMP biosynthesis via de novo pathway; (S)-dihydroorotate from bicarbonate: step 2/3. In terms of biological role, catalyzes the condensation of carbamoyl phosphate and aspartate to form carbamoyl aspartate and inorganic phosphate, the committed step in the de novo pyrimidine nucleotide biosynthesis pathway. This chain is Aspartate carbamoyltransferase catalytic subunit, found in Bacillus cereus (strain G9842).